The sequence spans 377 residues: Succinyl-diaminopimelate desuccinylase (377 aa).

H66 provides a ligand contact to Zn(2+). D68 is an active-site residue. Zn(2+) is bound at residue D99. Residue E133 is the Proton acceptor of the active site. The Zn(2+) site is built by E134, E162, and H348.

The protein belongs to the peptidase M20A family. DapE subfamily. In terms of assembly, homodimer. Zn(2+) serves as cofactor. It depends on Co(2+) as a cofactor.

The catalysed reaction is N-succinyl-(2S,6S)-2,6-diaminopimelate + H2O = (2S,6S)-2,6-diaminopimelate + succinate. Its pathway is amino-acid biosynthesis; L-lysine biosynthesis via DAP pathway; LL-2,6-diaminopimelate from (S)-tetrahydrodipicolinate (succinylase route): step 3/3. Its function is as follows. Catalyzes the hydrolysis of N-succinyl-L,L-diaminopimelic acid (SDAP), forming succinate and LL-2,6-diaminopimelate (DAP), an intermediate involved in the bacterial biosynthesis of lysine and meso-diaminopimelic acid, an essential component of bacterial cell walls. The polypeptide is Succinyl-diaminopimelate desuccinylase (Xylella fastidiosa (strain M12)).